The chain runs to 150 residues: Large ribosomal subunit protein uL15 (150 aa).

The tract at residues 1-55 is disordered; sequence MADNEILQMHDLKPAPGAKKDRTRVGRGEGSKGKTAGRGAKGQTKRNHVRPGFEG. Residues 8–32 are compositionally biased toward basic and acidic residues; it reads QMHDLKPAPGAKKDRTRVGRGEGSK.

It belongs to the universal ribosomal protein uL15 family. In terms of assembly, part of the 50S ribosomal subunit.

Functionally, binds to the 23S rRNA. In Bifidobacterium longum (strain DJO10A), this protein is Large ribosomal subunit protein uL15.